The primary structure comprises 454 residues: Sensor histidine kinase YkoH (454 aa).

Residues 1–12 (MKLKTKIHLYTS) are Cytoplasmic-facing. A helical membrane pass occupies residues 13 to 33 (ISLLILLILVHTAVYLIFSSA). Residues 34 to 153 (LTSKDAARLA…NTEESLFLLK (120 aa)) are Extracellular-facing. A helical membrane pass occupies residues 154–174 (IILIAASAAVCIASFFAGSLL). The Cytoplasmic segment spans residues 175–454 (ARRIINPIRR…QFSEQNGGGR (280 aa)). Residues 176–230 (RRIINPIRRLMITMKDIQRDKEFKTISLEGQSNDELYQMGLTFNEMAMMLKEHYD) enclose the HAMP domain. The region spanning 238–450 (DASHELKTPL…AVTMQFSEQN (213 aa)) is the Histidine kinase domain. H241 bears the Phosphohistidine; by autocatalysis mark.

It is found in the cell membrane. The catalysed reaction is ATP + protein L-histidine = ADP + protein N-phospho-L-histidine.. Its function is as follows. Probable member of the two-component regulatory system YkoH/YkoG. Potentially phosphorylates YkoG. The sequence is that of Sensor histidine kinase YkoH (ykoH) from Bacillus subtilis (strain 168).